The sequence spans 639 residues: Collagen alpha-1(XII) chain (639 aa).

The region spanning 1–114 (CRKSLLQAVA…DSLSKIVDDL (114 aa)) is the VWFA domain. Fibronectin type-III domains are found at residues 130 to 219 (APSN…LPVP), 220 to 310 (IVSL…LPLP), 311 to 401 (RPQD…VPAP), 402 to 490 (TNLR…SPKS), 491 to 585 (GPRN…TVRN), and 586 to 639 (LRVY…LRNL). Residues 473-496 (DESESDDLTGSERTSPKSGPRNLQ) are disordered.

The protein belongs to the fibril-associated collagens with interrupted helices (FACIT) family. In terms of assembly, trimer of identical chains each containing 190 kDa of non-triple-helical sequences. The triple-helical tail is stabilized by disulfide bonds at each end. Post-translationally, prolines at the third position of the tripeptide repeating unit (G-X-Y) are hydroxylated in some or all of the chains. In terms of processing, O-glycosylated; glycosaminoglycan of chondroitin-sulfate type.

It localises to the secreted. It is found in the extracellular space. The protein resides in the extracellular matrix. Its function is as follows. Type XII collagen interacts with type I collagen-containing fibrils, the COL1 domain could be associated with the surface of the fibrils, and the COL2 and NC3 domains may be localized in the perifibrillar matrix. The protein is Collagen alpha-1(XII) chain (COL12A1) of Oryctolagus cuniculus (Rabbit).